The chain runs to 127 residues: Aspartate 1-decarboxylase (127 aa).

S25 (schiff-base intermediate with substrate; via pyruvic acid) is an active-site residue. S25 is modified (pyruvic acid (Ser)). T57 provides a ligand contact to substrate. Residue Y58 is the Proton donor of the active site. 73–75 (GAA) is a substrate binding site.

It belongs to the PanD family. In terms of assembly, heterooctamer of four alpha and four beta subunits. It depends on pyruvate as a cofactor. In terms of processing, is synthesized initially as an inactive proenzyme, which is activated by self-cleavage at a specific serine bond to produce a beta-subunit with a hydroxyl group at its C-terminus and an alpha-subunit with a pyruvoyl group at its N-terminus.

The protein resides in the cytoplasm. It carries out the reaction L-aspartate + H(+) = beta-alanine + CO2. It participates in cofactor biosynthesis; (R)-pantothenate biosynthesis; beta-alanine from L-aspartate: step 1/1. Its function is as follows. Catalyzes the pyruvoyl-dependent decarboxylation of aspartate to produce beta-alanine. The polypeptide is Aspartate 1-decarboxylase (Bacillus pumilus (strain SAFR-032)).